Here is a 206-residue protein sequence, read N- to C-terminus: Large ribosomal subunit protein uL4 (206 aa).

A compositionally biased stretch (basic residues) spans 66–77 (QKGTGRARHHSA). The disordered stretch occupies residues 66-96 (QKGTGRARHHSARAPQFRGGGQAHGPVVRSH).

It belongs to the universal ribosomal protein uL4 family. Part of the 50S ribosomal subunit.

In terms of biological role, one of the primary rRNA binding proteins, this protein initially binds near the 5'-end of the 23S rRNA. It is important during the early stages of 50S assembly. It makes multiple contacts with different domains of the 23S rRNA in the assembled 50S subunit and ribosome. Its function is as follows. Forms part of the polypeptide exit tunnel. The chain is Large ribosomal subunit protein uL4 from Brucella anthropi (strain ATCC 49188 / DSM 6882 / CCUG 24695 / JCM 21032 / LMG 3331 / NBRC 15819 / NCTC 12168 / Alc 37) (Ochrobactrum anthropi).